Consider the following 346-residue polypeptide: Tetraacyldisaccharide 4'-kinase (346 aa).

Residue 53 to 60 (TCGGTGKT) coordinates ATP.

It belongs to the LpxK family.

The catalysed reaction is a lipid A disaccharide + ATP = a lipid IVA + ADP + H(+). It functions in the pathway glycolipid biosynthesis; lipid IV(A) biosynthesis; lipid IV(A) from (3R)-3-hydroxytetradecanoyl-[acyl-carrier-protein] and UDP-N-acetyl-alpha-D-glucosamine: step 6/6. Functionally, transfers the gamma-phosphate of ATP to the 4'-position of a tetraacyldisaccharide 1-phosphate intermediate (termed DS-1-P) to form tetraacyldisaccharide 1,4'-bis-phosphate (lipid IVA). The chain is Tetraacyldisaccharide 4'-kinase from Bartonella tribocorum (strain CIP 105476 / IBS 506).